Reading from the N-terminus, the 404-residue chain is uncharacterized protein (404 aa).

This sequence belongs to the lymphocryptovirus BTRF1 family.

This is an uncharacterized protein from Homo sapiens (Human).